A 121-amino-acid polypeptide reads, in one-letter code: Mitochondrial intermembrane space cysteine motif-containing protein MIX14 (121 aa).

CHCH domains follow at residues 14–56 (VANC…VPSV) and 60–105 (MSEC…VKNK). Short sequence motifs (cx9C motif) lie at residues 17-27 (CPQEFLQYHKC), 38-48 (CKDGRMILSTC), 63-73 (CSEPMKKYDQC), and 87-97 (CLGFLQDLRKC). 4 cysteine pairs are disulfide-bonded: C17/C48, C27/C38, C63/C97, and C73/C87.

Its subcellular location is the mitochondrion intermembrane space. The protein is Mitochondrial intermembrane space cysteine motif-containing protein MIX14 (MIX14) of Saccharomyces cerevisiae (strain ATCC 204508 / S288c) (Baker's yeast).